The primary structure comprises 321 residues: Glutaminase (321 aa).

The substrate site is built by Ser-69, Asn-120, Glu-165, Asn-172, Tyr-196, Tyr-248, and Val-266.

It belongs to the glutaminase family. As to quaternary structure, homotetramer.

The catalysed reaction is L-glutamine + H2O = L-glutamate + NH4(+). In Bacteroides fragilis (strain ATCC 25285 / DSM 2151 / CCUG 4856 / JCM 11019 / LMG 10263 / NCTC 9343 / Onslow / VPI 2553 / EN-2), this protein is Glutaminase.